The primary structure comprises 375 residues: MAIERYIGIMSGTSMDGVDTVLVEIEENSIRLMGENSFPMGEDLKQALLDICLGQSTNLQAVGELDHRLGHLFADAVIALLENTGISPDSITAIGSHGQTVFHSPETQYAFTMQLGDANIIAAKTHITTIADFRRKDMALGGQGAPLVPAFHQQLFSSLDTTRVILNIGGIANITVLTPNQPVTGYDTGPGNMLMDAWIHQHNGSQYDVNAKWAKTGTVNEILLERLLDEPYFKQPAPKSTGRELFNLPWLKQKLSGLDIPAEDVQATLAEFTAVTITNDVITYQHNERSELSTKQELLVCGGGAHNPLLMARLAAQLPKWQVMTTTERGVDSDNMEAMAFAWLAYRTHHNMPGNLPEVTGASGLTSLGAIYPAS.

Position 12–19 (12–19 (GTSMDGVD)) interacts with ATP.

Belongs to the anhydro-N-acetylmuramic acid kinase family.

It catalyses the reaction 1,6-anhydro-N-acetyl-beta-muramate + ATP + H2O = N-acetyl-D-muramate 6-phosphate + ADP + H(+). The protein operates within amino-sugar metabolism; 1,6-anhydro-N-acetylmuramate degradation. It functions in the pathway cell wall biogenesis; peptidoglycan recycling. Functionally, catalyzes the specific phosphorylation of 1,6-anhydro-N-acetylmuramic acid (anhMurNAc) with the simultaneous cleavage of the 1,6-anhydro ring, generating MurNAc-6-P. Is required for the utilization of anhMurNAc either imported from the medium or derived from its own cell wall murein, and thus plays a role in cell wall recycling. This is Anhydro-N-acetylmuramic acid kinase from Photobacterium profundum (strain SS9).